A 77-amino-acid polypeptide reads, in one-letter code: Large ribosomal subunit protein bL28 (77 aa).

The disordered stretch occupies residues 1–21; the sequence is MARVCKVTGKRPMTGNNVSHA.

Belongs to the bacterial ribosomal protein bL28 family.

The chain is Large ribosomal subunit protein bL28 from Chromobacterium violaceum (strain ATCC 12472 / DSM 30191 / JCM 1249 / CCUG 213 / NBRC 12614 / NCIMB 9131 / NCTC 9757 / MK).